Reading from the N-terminus, the 239-residue chain is Ribosomal RNA small subunit methyltransferase G (239 aa).

S-adenosyl-L-methionine is bound by residues glycine 77, phenylalanine 82, 128 to 129, and arginine 147; that span reads AE.

Belongs to the methyltransferase superfamily. RNA methyltransferase RsmG family.

Its subcellular location is the cytoplasm. Functionally, specifically methylates the N7 position of guanine in position 535 of 16S rRNA. The protein is Ribosomal RNA small subunit methyltransferase G of Bacillus cereus (strain AH187).